The chain runs to 750 residues: Photosystem I P700 chlorophyll a apoprotein A1 (750 aa).

The next 8 helical transmembrane spans lie at 70-93 (IFSA…FHGA), 156-179 (LYCT…FHYH), 195-219 (LNHH…HVSL), 291-309 (IAHH…GHMY), 346-369 (WHAQ…HHMY), 385-411 (LSLF…IFMV), 433-455 (AIIS…LYIH), and 531-549 (FLVH…LILL). [4Fe-4S] cluster-binding residues include cysteine 573 and cysteine 582. Transmembrane regions (helical) follow at residues 589–610 (HVFL…HFSW) and 664–686 (LSAY…MFLF). Histidine 675 lines the chlorophyll a' pocket. Positions 683 and 691 each coordinate chlorophyll a. Position 692 (tryptophan 692) interacts with phylloquinone. The chain crosses the membrane as a helical span at residues 724–744 (AVGVTHYLLGGIATTWAFFLA).

This sequence belongs to the PsaA/PsaB family. As to quaternary structure, the PsaA/B heterodimer binds the P700 chlorophyll special pair and subsequent electron acceptors. PSI consists of a core antenna complex that captures photons, and an electron transfer chain that converts photonic excitation into a charge separation. The eukaryotic PSI reaction center is composed of at least 11 subunits. It depends on P700 is a chlorophyll a/chlorophyll a' dimer, A0 is one or more chlorophyll a, A1 is one or both phylloquinones and FX is a shared 4Fe-4S iron-sulfur center. as a cofactor.

The protein localises to the plastid. The protein resides in the chloroplast thylakoid membrane. It catalyses the reaction reduced [plastocyanin] + hnu + oxidized [2Fe-2S]-[ferredoxin] = oxidized [plastocyanin] + reduced [2Fe-2S]-[ferredoxin]. Functionally, psaA and PsaB bind P700, the primary electron donor of photosystem I (PSI), as well as the electron acceptors A0, A1 and FX. PSI is a plastocyanin-ferredoxin oxidoreductase, converting photonic excitation into a charge separation, which transfers an electron from the donor P700 chlorophyll pair to the spectroscopically characterized acceptors A0, A1, FX, FA and FB in turn. Oxidized P700 is reduced on the lumenal side of the thylakoid membrane by plastocyanin. The chain is Photosystem I P700 chlorophyll a apoprotein A1 from Nandina domestica (Heavenly bamboo).